Reading from the N-terminus, the 127-residue chain is Small ribosomal subunit protein eS6 (127 aa).

The protein belongs to the eukaryotic ribosomal protein eS6 family.

This chain is Small ribosomal subunit protein eS6, found in Picrophilus torridus (strain ATCC 700027 / DSM 9790 / JCM 10055 / NBRC 100828 / KAW 2/3).